A 329-amino-acid chain; its full sequence is Synaptonemal complex central element protein 1 (329 aa).

Residues 1 to 29 (MATRPQPLGMEPEGSADLLHGPEGARGQY) are disordered. Coiled-coil stretches lie at residues 54–167 (RIEV…LETL) and 194–294 (KEQL…ILAH). The disordered stretch occupies residues 291-329 (ILAHSTQNEEDSSWRMASPKPVEVHEETAQDQERPSSRT). Over residues 312–329 (VEVHEETAQDQERPSSRT) the composition is skewed to basic and acidic residues.

This sequence belongs to the SYCE family. As to quaternary structure, homodimer. Found in a complex with SYCP1 and SYCE2. Interacts with SYCP1, SYCE2 and SYCE3. Interacts with SIX6OS1. In terms of tissue distribution, meiotic cells (at protein level). Expressed in the ovary and testis.

Its subcellular location is the nucleus. The protein resides in the chromosome. Major component of the transverse central element of synaptonemal complexes (SCS), formed between homologous chromosomes during meiotic prophase. Requires SYCP1 in order to be incorporated into the central element. May have a role in the synaptonemal complex assembly, stabilization and recombination. The chain is Synaptonemal complex central element protein 1 (Syce1) from Mus musculus (Mouse).